We begin with the raw amino-acid sequence, 638 residues long: Chaperone protein DnaK (638 aa).

The residue at position 199 (Thr-199) is a Phosphothreonine; by autocatalysis. The span at 603 to 618 (YAQPGAEAGAEQQGSA) shows a compositional bias: low complexity. The disordered stretch occupies residues 603–638 (YAQPGAEAGAEQQGSANNADDDIVDAEFEEVNDDKK). Positions 621-638 (ADDDIVDAEFEEVNDDKK) are enriched in acidic residues.

This sequence belongs to the heat shock protein 70 family.

Functionally, acts as a chaperone. In Hydrogenovibrio crunogenus (strain DSM 25203 / XCL-2) (Thiomicrospira crunogena), this protein is Chaperone protein DnaK.